The primary structure comprises 192 residues: uncharacterized protein (192 aa).

To R.meliloti RA0936 and y4nF.

This is an uncharacterized protein from Sinorhizobium fredii (strain NBRC 101917 / NGR234).